The sequence spans 59 residues: Large ribosomal subunit protein uL30 (59 aa).

It belongs to the universal ribosomal protein uL30 family. Part of the 50S ribosomal subunit.

The sequence is that of Large ribosomal subunit protein uL30 from Mycolicibacterium vanbaalenii (strain DSM 7251 / JCM 13017 / BCRC 16820 / KCTC 9966 / NRRL B-24157 / PYR-1) (Mycobacterium vanbaalenii).